The primary structure comprises 35 residues: Bacteriocin lactococcin-G subunit beta (35 aa).

As to quaternary structure, bacteriocin activity requires interaction of alpha and beta peptides in a molar ratio of 7:1 or 8:1 respectively.

In terms of biological role, kills Lactococci. The protein is Bacteriocin lactococcin-G subunit beta of Lactococcus lactis subsp. lactis (Streptococcus lactis).